We begin with the raw amino-acid sequence, 208 residues long: Small ribosomal subunit protein uS4 (208 aa).

Residues 98–161 (QRLDNVVFRM…KSNPQVVRAL (64 aa)) enclose the S4 RNA-binding domain.

The protein belongs to the universal ribosomal protein uS4 family. Part of the 30S ribosomal subunit. Contacts protein S5. The interaction surface between S4 and S5 is involved in control of translational fidelity.

Its function is as follows. One of the primary rRNA binding proteins, it binds directly to 16S rRNA where it nucleates assembly of the body of the 30S subunit. In terms of biological role, with S5 and S12 plays an important role in translational accuracy. The sequence is that of Small ribosomal subunit protein uS4 from Aliarcobacter butzleri (strain RM4018) (Arcobacter butzleri).